The chain runs to 362 residues: Acyl-CoA-binding domain-containing protein 3 (362 aa).

A signal peptide spans 1-22 (MEVFLEMLLTAVVALLFSFLLA). 2 disordered regions span residues 132 to 151 (QDEQ…SPEN) and 193 to 214 (VEKS…EKTE). Positions 192-221 (RVEKSSNMVEESDAEAENEEKTELTIEEDD) form a coiled coil. One can recognise an ACB domain in the interval 231–318 (LEKAFAAAVN…VSKEIPGLTK (88 aa)). An acyl-CoA is bound by residues 260-264 (FGLHK), K286, and Y305. The segment at 329-362 (METSVGLPPNSGSLEDPTNLVTTGVDESSKNGIP) is disordered.

Belongs to the ACBP family. In terms of tissue distribution, expressed in roots, stems, leaves, flowers and siliques.

The protein localises to the secreted. It is found in the extracellular space. Its function is as follows. Binds medium- and long-chain acyl-CoA esters with very high affinity. Can interact in vitro with arachidonyl-CoA, barely with oleoyl-CoA, but not with palmitoyl-CoA. The protein is Acyl-CoA-binding domain-containing protein 3 (ACBP3) of Arabidopsis thaliana (Mouse-ear cress).